The chain runs to 110 residues: UPF0122 protein GK1195 (110 aa).

It belongs to the UPF0122 family.

Functionally, might take part in the signal recognition particle (SRP) pathway. This is inferred from the conservation of its genetic proximity to ftsY/ffh. May be a regulatory protein. This Geobacillus kaustophilus (strain HTA426) protein is UPF0122 protein GK1195.